The sequence spans 55 residues: MAKTNTVQIKLVSTADTGFFYVTKKNAKAQTGKLEFRKYDPVARKHVTFKEAKIK.

Belongs to the bacterial ribosomal protein bL33 family.

This Acidiphilium cryptum (strain JF-5) protein is Large ribosomal subunit protein bL33.